Here is a 159-residue protein sequence, read N- to C-terminus: Growth arrest and DNA damage-inducible protein GADD45 gamma (159 aa).

Residues 43-86 (VYESAKVLNVDPDNVTFCVLAADEEDEGDIALQIHFTLIQAFCC) are homodimerization.

Belongs to the GADD45 family. Undergoes concentration-dependent homodimerization, which is required for growth inhibititory activity and enhances interaction with PCNA. Interacts with GADD45GIP1. Interacts with PCNA.

Its function is as follows. Involved in the regulation of growth and apoptosis. Mediates activation of stress-responsive MTK1/MEKK4 MAPKKK. This is Growth arrest and DNA damage-inducible protein GADD45 gamma (Gadd45g) from Rattus norvegicus (Rat).